The chain runs to 139 residues: Prostate-associated microseminoprotein (139 aa).

Residues Met1 to Ser35 form the signal peptide. 5 cysteine pairs are disulfide-bonded: Cys38–Cys78, Cys46–Cys69, Cys64–Cys100, Cys67–Cys77, and Cys91–Cys114. The segment at Gly116–Ser139 is disordered.

It belongs to the beta-microseminoprotein family.

Its subcellular location is the secreted. In terms of biological role, acts as a ligand for C-C chemokine receptor CCR2. Signals through binding and activation of CCR2 and induces a strong chemotactic response and mobilization of intracellular calcium ions. Exhibits a chemotactic activity for monocytes and lymphocytes but not neutrophils. The sequence is that of Prostate-associated microseminoprotein (Msmp) from Mus musculus (Mouse).